A 239-amino-acid polypeptide reads, in one-letter code: 1-(5-phosphoribosyl)-5-[(5-phosphoribosylamino)methylideneamino] imidazole-4-carboxamide isomerase (239 aa).

Aspartate 8 serves as the catalytic Proton acceptor. Aspartate 129 (proton donor) is an active-site residue.

This sequence belongs to the HisA/HisF family.

Its subcellular location is the cytoplasm. It carries out the reaction 1-(5-phospho-beta-D-ribosyl)-5-[(5-phospho-beta-D-ribosylamino)methylideneamino]imidazole-4-carboxamide = 5-[(5-phospho-1-deoxy-D-ribulos-1-ylimino)methylamino]-1-(5-phospho-beta-D-ribosyl)imidazole-4-carboxamide. It functions in the pathway amino-acid biosynthesis; L-histidine biosynthesis; L-histidine from 5-phospho-alpha-D-ribose 1-diphosphate: step 4/9. This chain is 1-(5-phosphoribosyl)-5-[(5-phosphoribosylamino)methylideneamino] imidazole-4-carboxamide isomerase, found in Bacillus cereus (strain AH820).